A 134-amino-acid chain; its full sequence is Lymphocyte antigen 6 complex locus protein G6d (134 aa).

A signal peptide spans 1-19; that stretch reads MNSQLIGILFSALLGAALG. Positions 22-121 constitute a UPAR/Ly6 domain; that stretch reads MRCYDCGGGP…ASSSTPLCIL (100 aa). Disulfide bonds link Cys24-Cys48, Cys27-Cys35, Cys42-Cys76, Cys82-Cys101, and Cys102-Cys107. O-linked (GalNAc...) threonine glycosylation occurs at Thr68. Asn108 carries the GPI-anchor amidated asparagine lipid modification. Positions 109–134 are cleaved as a propeptide — removed in mature form; that stretch reads GAVASSSTPLCILAAVTTLAWLLSGQ.

In terms of assembly, homodimer. In terms of processing, O-glycosylated.

The protein localises to the cell membrane. This is Lymphocyte antigen 6 complex locus protein G6d (Ly6g6d) from Rattus norvegicus (Rat).